Consider the following 567-residue polypeptide: Proline--tRNA ligase (567 aa).

Belongs to the class-II aminoacyl-tRNA synthetase family. ProS type 1 subfamily. In terms of assembly, homodimer.

The protein resides in the cytoplasm. It catalyses the reaction tRNA(Pro) + L-proline + ATP = L-prolyl-tRNA(Pro) + AMP + diphosphate. Catalyzes the attachment of proline to tRNA(Pro) in a two-step reaction: proline is first activated by ATP to form Pro-AMP and then transferred to the acceptor end of tRNA(Pro). As ProRS can inadvertently accommodate and process non-cognate amino acids such as alanine and cysteine, to avoid such errors it has two additional distinct editing activities against alanine. One activity is designated as 'pretransfer' editing and involves the tRNA(Pro)-independent hydrolysis of activated Ala-AMP. The other activity is designated 'posttransfer' editing and involves deacylation of mischarged Ala-tRNA(Pro). The misacylated Cys-tRNA(Pro) is not edited by ProRS. In Staphylococcus aureus (strain USA300), this protein is Proline--tRNA ligase.